We begin with the raw amino-acid sequence, 122 residues long: Large ribosomal subunit protein bL17 (122 aa).

The protein belongs to the bacterial ribosomal protein bL17 family. In terms of assembly, part of the 50S ribosomal subunit. Contacts protein L32.

In Neisseria meningitidis serogroup C / serotype 2a (strain ATCC 700532 / DSM 15464 / FAM18), this protein is Large ribosomal subunit protein bL17.